Reading from the N-terminus, the 723-residue chain is Phenylalanine ammonia-lyase (723 aa).

Y77 serves as the catalytic Proton donor/acceptor. A cross-link (5-imidazolinone (Ala-Gly)) is located at residues A182–G184. S183 is modified (2,3-didehydroalanine (Ser)). N241, Q336, R342, N372, K443, E471, and N474 together coordinate (E)-cinnamate.

This sequence belongs to the PAL/histidase family. Post-translationally, contains an active site 4-methylidene-imidazol-5-one (MIO), which is formed autocatalytically by cyclization and dehydration of residues Ala-Ser-Gly.

It localises to the cytoplasm. It carries out the reaction L-phenylalanine = (E)-cinnamate + NH4(+). It functions in the pathway secondary metabolite biosynthesis. The protein operates within phenylpropanoid metabolism; trans-cinnamate biosynthesis; trans-cinnamate from L-phenylalanine: step 1/1. Its function is as follows. Phenylalanine ammonia-lyase; part of the gene cluster that mediates the biosynthesis of squalestatin S1 (SQS1, also known as zaragozic acid A), a heavily oxidized fungal polyketide that offers potent cholesterol lowering activity by targeting squalene synthase (SS). SQS1 is composed of a 2,8-dioxobicyclic[3.2.1]octane-3,4,5-tricarboxyclic acid core that is connected to two lipophilic polyketide arms. These initial steps feature the priming of an unusual benzoic acid starter unit onto the highly reducing polyketide synthase clz14, followed by oxaloacetate extension and product release to generate a tricarboxylic acid containing product. The phenylalanine ammonia lyase (PAL) clz10 and the acyl-CoA ligase clz12 are involved in transforming phenylalanine into benzoyl-CoA. The citrate synthase-like protein clz17 is involved in connecting the C-alpha-carbons of the hexaketide chain and oxaloacetate to afford the tricarboxylic acid unit. The potential hydrolytic enzymes, clz11 and clz13, are in close proximity to pks2 and may participate in product release. On the other side, the tetraketide arm is synthesized by a the squalestatin tetraketide synthase clz2 and enzymatically esterified to the core in the last biosynthetic step, by the acetyltransferase clz6. The biosynthesis of the tetraketide must involve 3 rounds of chain extension. After the first and second rounds methyl-transfer occurs, and in all rounds of extension the ketoreductase and dehydratase are active. The enoyl reductase and C-MeT of clz2 are not active in the final round of extension. The acetyltransferase clz6 appears to have a broad substrate selectivity for its acyl CoA substrate, allowing the in vitro synthesis of novel squalestatins. The biosynthesis of SQS1 requires several oxidative steps likely performed by oxidoreductases clz3, clz15 and clz16. Finally, in support of the identification of the cluster as being responsible for SQS1 production, the cluster contains a gene encoding a putative squalene synthase (SS) clz20, suggesting a likely mechanism for self-resistance. This Cochliobolus lunatus (Filamentous fungus) protein is Phenylalanine ammonia-lyase.